Here is a 338-residue protein sequence, read N- to C-terminus: Glyceraldehyde-3-phosphate dehydrogenase 2 (338 aa).

Residues 13–14 (RI), D35, and R80 contribute to the NAD(+) site. Residues 151–153 (SCT), T182, 211–212 (TG), and R234 contribute to the D-glyceraldehyde 3-phosphate site. Residue C152 is the Nucleophile of the active site. N316 contacts NAD(+).

It belongs to the glyceraldehyde-3-phosphate dehydrogenase family. As to quaternary structure, homotetramer.

The protein localises to the cytoplasm. It catalyses the reaction D-glyceraldehyde 3-phosphate + phosphate + NAD(+) = (2R)-3-phospho-glyceroyl phosphate + NADH + H(+). It participates in carbohydrate degradation; glycolysis; pyruvate from D-glyceraldehyde 3-phosphate: step 1/5. Its activity is regulated as follows. Inhibited by koningic acid through the interaction of cysteine residues with koningic acid even at very low concentrations. The protein is Glyceraldehyde-3-phosphate dehydrogenase 2 (gpd2) of Trichoderma koningii (Hypocrea koningii).